The chain runs to 233 residues: Ribosome maturation protein SDO1 homolog (233 aa).

The protein belongs to the SDO1/SBDS family.

In Aeropyrum pernix (strain ATCC 700893 / DSM 11879 / JCM 9820 / NBRC 100138 / K1), this protein is Ribosome maturation protein SDO1 homolog.